The following is a 282-amino-acid chain: Putative quercetin 2,3-dioxygenase VC_A0969 (282 aa).

The interval 1–21 is disordered; it reads MTKDREIRQTVPAQPTSDGDG. A divalent metal cation contacts are provided by His59, His61, His103, and Glu105.

The protein belongs to the pirin family. A divalent metal cation is required as a cofactor.

The enzyme catalyses quercetin + O2 = 2-(3,4-dihydroxybenzoyloxy)-4,6-dihydroxybenzoate + CO. Its pathway is flavonoid metabolism; quercetin degradation. In terms of biological role, putative quercetin 2,3-dioxygenase. The protein is Putative quercetin 2,3-dioxygenase VC_A0969 of Vibrio cholerae serotype O1 (strain ATCC 39315 / El Tor Inaba N16961).